We begin with the raw amino-acid sequence, 218 residues long: 3-oxo-tetronate 4-phosphate decarboxylase (218 aa).

The Proton acceptor role is filled by Glu86. Glu86, His105, and His107 together coordinate Zn(2+). The active-site Proton donor is Tyr132. His172 is a binding site for Zn(2+).

Belongs to the aldolase class II family. AraD/FucA subfamily. The cofactor is Zn(2+).

It carries out the reaction 3-dehydro-4-O-phospho-D-erythronate + H(+) = dihydroxyacetone phosphate + CO2. The catalysed reaction is 3-dehydro-4-O-phospho-L-erythronate + H(+) = dihydroxyacetone phosphate + CO2. Its function is as follows. Catalyzes the decarboxylation of 3-oxo-tetronate 4-phosphate to dihydroxyacetone phosphate (DHAP) and CO(2). The polypeptide is 3-oxo-tetronate 4-phosphate decarboxylase (Pectobacterium atrosepticum (strain SCRI 1043 / ATCC BAA-672) (Erwinia carotovora subsp. atroseptica)).